Reading from the N-terminus, the 384-residue chain is Probable fructokinase-6, chloroplastic (384 aa).

Residues 1–46 constitute a chloroplast transit peptide; the sequence is MALQATTTTFCFSGPTFRSTPHSLTSKRPISIKATTSSPSRLSNSR. A disordered region spans residues 34–61; the sequence is ATTSSPSRLSNSRSNLKGRALSSDGSTQ. Over residues 35-48 the composition is skewed to low complexity; the sequence is TTSSPSRLSNSRSN.

It belongs to the carbohydrate kinase PfkB family.

It is found in the plastid. Its subcellular location is the chloroplast. It catalyses the reaction D-fructose + ATP = D-fructose 6-phosphate + ADP + H(+). Its pathway is glycan biosynthesis; starch biosynthesis. Its function is as follows. May play an important role in maintaining the flux of carbon towards starch formation. In Arabidopsis thaliana (Mouse-ear cress), this protein is Probable fructokinase-6, chloroplastic.